The primary structure comprises 51 residues: Sperm protamine P1 (51 aa).

Intrachain disulfides connect cysteine 7-cysteine 15 and cysteine 38-cysteine 48.

The protein belongs to the protamine P1 family. In terms of assembly, cross-linked by interchain disulfide bonds around the DNA-helix. Post-translationally, phosphorylated by SRPK1. In terms of tissue distribution, testis.

Its subcellular location is the nucleus. It localises to the chromosome. In terms of biological role, protamines substitute for histones in the chromatin of sperm during the haploid phase of spermatogenesis. They compact sperm DNA into a highly condensed, stable and inactive complex. The protein is Sperm protamine P1 (Prm1) of Rattus norvegicus (Rat).